We begin with the raw amino-acid sequence, 129 residues long: Ribonuclease P protein component (129 aa).

Belongs to the RnpA family. As to quaternary structure, consists of a catalytic RNA component (M1 or rnpB) and a protein subunit.

It catalyses the reaction Endonucleolytic cleavage of RNA, removing 5'-extranucleotides from tRNA precursor.. RNaseP catalyzes the removal of the 5'-leader sequence from pre-tRNA to produce the mature 5'-terminus. It can also cleave other RNA substrates such as 4.5S RNA. The protein component plays an auxiliary but essential role in vivo by binding to the 5'-leader sequence and broadening the substrate specificity of the ribozyme. In Corynebacterium jeikeium (strain K411), this protein is Ribonuclease P protein component.